The sequence spans 985 residues: MSLPSLADFPAILLPFITRARQTWRTALTELSAEALASFEAWPEARRTAFDRVCAASDFVTEQICRDPQMLLQLAGSGELERSFSVGELRGQIADALSSAVTEDELGRNLRRQRARQQVRIIWRDLTRQADLIETCRDLSEMADASIDLAYQWLYPRHCQQFGTPTGRHCGLPQQMVILGMGKLGAVELNLSSDIDLIFAYPEGGETVGTKRALDNQEFFIRLGQRLIKALDPVTVDGFVFRVDMRLRPYGSSGALVLSFNALEQYYQDQGRDWERYAMIKARVVGGDLAAGAELLEMLRPFVYRRYLDFSAIEALRTMKQLIQQEVKRKGMAENIKLGAGGIREVEFIAQAFQLIHGGRDLSLQQRPLFNVLKTLEGQGYLPSAVTEELREGYEFLRYTEHAIQAIADRQTQMLPDNEQDQARIALIMGFADWASFHERLMYWRSRVSWHFRQVIADPDSDPDDELQDDSEVVVGGEWLPLWEESQDEDAAGRQLLQAGFVDTGKALKSLADLRSSPNLRSMQRLSRERLDAFIPRLLAQAVEHEKPDLVLERVLPLVEAVARRSAYLVLLTENPDALRQLLTLCAASPWIAEQIARFPLLLDELLNEGRLFNPPLAPELAAELRERLVRIPEDDLEQQMEALRHFKLAHSLRVAASEISGSLPLMKVSDYLTWLAEAILDQVLALAWRYSVARHGTPSRPDGTLCDPGFVIVGYGKVGGIELGHGSDLDLVFIHDGDLQTETDGAKPIDSAQFFTRLGQRVIHLLTTQTNSGQLYDVDMRLRPSGASGLLVSSLGAFARYQANEAWTWEHQALVRARVLTGSRDVGEQFEKVRADVLGRERDLDTLRAEVSEMRAKMRDNLGTRLTAAGRAANAFEASVPFDLKQDAGGIVDIEFMVQYAALAWSREHPALLQHTDNIRILEGLEEAGLLPDVDASLLREAYKAYRSAAHRQALQKQAGVVGGDQFHAQRREVMRIWAQMGLS.

The interval 1-460 is adenylyl removase; that stretch reads MSLPSLADFP…HFRQVIADPD (460 aa). The adenylyl transferase stretch occupies residues 476–985; sequence GGEWLPLWEE…MRIWAQMGLS (510 aa).

It belongs to the GlnE family. Requires Mg(2+) as cofactor.

The enzyme catalyses [glutamine synthetase]-O(4)-(5'-adenylyl)-L-tyrosine + phosphate = [glutamine synthetase]-L-tyrosine + ADP. The catalysed reaction is [glutamine synthetase]-L-tyrosine + ATP = [glutamine synthetase]-O(4)-(5'-adenylyl)-L-tyrosine + diphosphate. In terms of biological role, involved in the regulation of glutamine synthetase GlnA, a key enzyme in the process to assimilate ammonia. When cellular nitrogen levels are high, the C-terminal adenylyl transferase (AT) inactivates GlnA by covalent transfer of an adenylyl group from ATP to specific tyrosine residue of GlnA, thus reducing its activity. Conversely, when nitrogen levels are low, the N-terminal adenylyl removase (AR) activates GlnA by removing the adenylyl group by phosphorolysis, increasing its activity. The regulatory region of GlnE binds the signal transduction protein PII (GlnB) which indicates the nitrogen status of the cell. The protein is Bifunctional glutamine synthetase adenylyltransferase/adenylyl-removing enzyme of Pseudomonas syringae pv. tomato (strain ATCC BAA-871 / DC3000).